Reading from the N-terminus, the 471-residue chain is Cysteine--tRNA ligase (471 aa).

C30 lines the Zn(2+) pocket. Positions 32 to 42 (PTVYNFAHIGN) match the 'HIGH' region motif. Residues C212, H237, and E241 each contribute to the Zn(2+) site. The short motif at 270–274 (KMSKS) is the 'KMSKS' region element. K273 serves as a coordination point for ATP.

This sequence belongs to the class-I aminoacyl-tRNA synthetase family. As to quaternary structure, monomer. The cofactor is Zn(2+).

It localises to the cytoplasm. The enzyme catalyses tRNA(Cys) + L-cysteine + ATP = L-cysteinyl-tRNA(Cys) + AMP + diphosphate. This chain is Cysteine--tRNA ligase, found in Leptospira interrogans serogroup Icterohaemorrhagiae serovar Lai (strain 56601).